The sequence spans 451 residues: UDP-N-acetylmuramoylalanine--D-glutamate ligase (451 aa).

120–126 (GSNGKTT) contributes to the ATP binding site.

Belongs to the MurCDEF family.

The protein localises to the cytoplasm. It catalyses the reaction UDP-N-acetyl-alpha-D-muramoyl-L-alanine + D-glutamate + ATP = UDP-N-acetyl-alpha-D-muramoyl-L-alanyl-D-glutamate + ADP + phosphate + H(+). Its pathway is cell wall biogenesis; peptidoglycan biosynthesis. Its function is as follows. Cell wall formation. Catalyzes the addition of glutamate to the nucleotide precursor UDP-N-acetylmuramoyl-L-alanine (UMA). The chain is UDP-N-acetylmuramoylalanine--D-glutamate ligase from Bacillus velezensis (strain DSM 23117 / BGSC 10A6 / LMG 26770 / FZB42) (Bacillus amyloliquefaciens subsp. plantarum).